Consider the following 276-residue polypeptide: NADH-cytochrome b5 reductase 2 (276 aa).

Residues 15-127 enclose the FAD-binding FR-type domain; it reads EAKYPLPLIE…RGPRGRLFYH (113 aa). At K17 the chain carries N6-acetyllysine. Y18 is modified (phosphotyrosine). Residues 107 to 137 and 146 to 181 each bind FAD; these read ENMK…IRPD and LADH…RMSL.

The protein belongs to the flavoprotein pyridine nucleotide cytochrome reductase family. Requires FAD as cofactor. Restricted expression.

It carries out the reaction 2 Fe(III)-[cytochrome b5] + NADH = 2 Fe(II)-[cytochrome b5] + NAD(+) + H(+). Functionally, NADH-cytochrome b5 reductases are involved in desaturation and elongation of fatty acids, cholesterol biosynthesis, drug metabolism, and, in erythrocyte, methemoglobin reduction. Responsible for NADH-dependent lucigenin chemiluminescence in spermatozoa by reducing both lucigenin and 2-[4-iodophenyl]-3-[4-nitrophenyl]-5-[2,4-disulfophenyl]-2H tetrazolium monosodium salt (WST-1). The protein is NADH-cytochrome b5 reductase 2 of Homo sapiens (Human).